The following is a 363-amino-acid chain: Mannose-1-phosphate guanyltransferase (363 aa).

This sequence belongs to the transferase hexapeptide repeat family.

The protein resides in the cytoplasm. It carries out the reaction alpha-D-mannose 1-phosphate + GTP + H(+) = GDP-alpha-D-mannose + diphosphate. Its pathway is nucleotide-sugar biosynthesis; GDP-alpha-D-mannose biosynthesis; GDP-alpha-D-mannose from alpha-D-mannose 1-phosphate (GTP route): step 1/1. Its function is as follows. Involved in cell wall synthesis where it is required for glycosylation. Involved in cell cycle progression through cell-size checkpoint. Required for the correct assembly of the septum. This Schizosaccharomyces pombe (strain 972 / ATCC 24843) (Fission yeast) protein is Mannose-1-phosphate guanyltransferase (mpg1).